A 260-amino-acid chain; its full sequence is Histidine-binding periplasmic protein (260 aa).

An N-terminal signal peptide occupies residues 1–22 (MKKLVLSLSLVLAFSSATAAFA). An intrachain disulfide couples Cys-60 to Cys-67. Residues Ser-91, Ser-92, Ser-94, Arg-99, Thr-143, and Asp-183 each coordinate L-histidine.

The protein belongs to the bacterial solute-binding protein 3 family. As to quaternary structure, the complex is composed of two ATP-binding proteins (HisP), two transmembrane proteins (HisM and HisQ) and a solute-binding protein (HisJ).

It is found in the periplasm. In terms of biological role, part of the ABC transporter complex HisPMQJ involved in histidine transport. Binds histidine. Interacts with HisQMP and stimulates ATPase activity of HisP, which results in histidine translocation. The polypeptide is Histidine-binding periplasmic protein (hisJ) (Escherichia coli O157:H7).